The sequence spans 84 residues: ICP35 (84 aa).

The sequence is that of ICP35 from Crustacea (WSSV).